The sequence spans 343 residues: Coiled-coil domain-containing protein 97 (343 aa).

Met-1 carries the N-acetylmethionine modification. Residues 1–37 (MEAVATATAAKEPDKGCIEPGPGHWGELSRTPVPSKP) form a disordered region. Residue Thr-47 is modified to Phosphothreonine. Disordered stretches follow at residues 200–220 (ARTP…ACPL), 234–277 (QQRL…DSEE), and 292–343 (RFLD…LDGD). Residues 224–262 (LLQSYEERELQQRLLQQQEEEEACLEEEEEEEDSDEEDQ) are a coiled coil. Residues 241 to 261 (QEEEEACLEEEEEEEDSDEED) show a composition bias toward acidic residues. Residues 262–277 (QRSGKDSEAWVPDSEE) show a composition bias toward basic and acidic residues. Phosphoserine is present on residues Ser-275 and Ser-337. The span at 324–343 (ERYFDEEEPEDAPSPELDGD) shows a compositional bias: acidic residues.

Associates with splicing factor SF3B complex, involved in branch-site recognition.

The protein localises to the nucleus. Functionally, may play a role pre-mRNA splicing through the association with the splicing factor SF3B complex which is involved in branch-site recognition. This chain is Coiled-coil domain-containing protein 97 (CCDC97), found in Homo sapiens (Human).